The sequence spans 627 residues: Chaperone protein HtpG (627 aa).

Positions M1–R343 are a; substrate-binding. Residues E344 to K553 form a b region. Residues V554–S627 are c.

The protein belongs to the heat shock protein 90 family. As to quaternary structure, homodimer.

The protein localises to the cytoplasm. Molecular chaperone. Has ATPase activity. This chain is Chaperone protein HtpG, found in Natranaerobius thermophilus (strain ATCC BAA-1301 / DSM 18059 / JW/NM-WN-LF).